The following is a 293-amino-acid chain: Ribosomal protein L11 methyltransferase (293 aa).

4 residues coordinate S-adenosyl-L-methionine: T145, G166, D188, and N230.

The protein belongs to the methyltransferase superfamily. PrmA family.

Its subcellular location is the cytoplasm. It catalyses the reaction L-lysyl-[protein] + 3 S-adenosyl-L-methionine = N(6),N(6),N(6)-trimethyl-L-lysyl-[protein] + 3 S-adenosyl-L-homocysteine + 3 H(+). Functionally, methylates ribosomal protein L11. The protein is Ribosomal protein L11 methyltransferase of Salmonella newport (strain SL254).